The sequence spans 264 residues: MAIRHFRRQREQVTSGSSSDTETSDVSEQDTGAGEGPTEAETRAEGAEQGAWERAPSVAGSEAGESDEDDSESSSSDDEEVVLHRPVFLKKRDPGAGPAARTGAVSGAQERTLDQVQHHNAVQDKERALKQIATSYSTDKELLHRIAQLETDGDTDSDSERREHELWAQRRHQRMLRLREEERRRQSELEENEAARLTNSALPMDDAGIQTAGGAERGTRPASSSDARKRRGPEAKFKPSKVQKPQLKRTASPSRADENEFSIL.

Disordered stretches follow at residues 1-109 (MAIR…SGAQ) and 178-264 (LREE…FSIL). Positions 64-80 (GESDEDDSESSSSDDEE) are enriched in acidic residues. Over residues 178 to 188 (LREEERRRQSE) the composition is skewed to basic and acidic residues.

Belongs to the SPP381 family. Component of the 25S U4/U6.U5 tri-snRNP particle, a subcomplex of the spliceosome.

The protein resides in the nucleus. Component of the spliceosome and rRNA processing machinery. In association with the spliceosomal U4/U6.U5 tri-snRNP particle, required for splicing of pre-mRNA. The protein is Pre-mRNA-splicing factor SPP381 (SPP381) of Eremothecium gossypii (strain ATCC 10895 / CBS 109.51 / FGSC 9923 / NRRL Y-1056) (Yeast).